The following is a 377-amino-acid chain: Putative F-box protein At1g70380 (377 aa).

The F-box domain occupies Asn-3–Ala-48.

The protein is Putative F-box protein At1g70380 of Arabidopsis thaliana (Mouse-ear cress).